Reading from the N-terminus, the 355-residue chain is Protein RecA (355 aa).

78-85 (GPESSGKT) contributes to the ATP binding site.

This sequence belongs to the RecA family.

The protein localises to the cytoplasm. Functionally, can catalyze the hydrolysis of ATP in the presence of single-stranded DNA, the ATP-dependent uptake of single-stranded DNA by duplex DNA, and the ATP-dependent hybridization of homologous single-stranded DNAs. It interacts with LexA causing its activation and leading to its autocatalytic cleavage. This chain is Protein RecA, found in Rhodobacter capsulatus (Rhodopseudomonas capsulata).